A 98-amino-acid chain; its full sequence is Hainantoxin-XVII.2 (98 aa).

The first 40 residues, 1 to 40, serve as a signal peptide directing secretion; sequence MTTVGVSLFRRSPEKITMKIAAFLGLSFLLIASYVLICEA. Positions 41 to 64 are excised as a propeptide; the sequence is QHPGFQELLILEENMRDPENSKER. Disulfide bonds link Cys66–Cys81, Cys73–Cys85, and Cys80–Cys95.

It belongs to the hainantoxin family. 17 subfamily. In terms of tissue distribution, expressed by the venom gland.

Its subcellular location is the secreted. Functionally, putative ion channel inhibitor. In Cyriopagopus hainanus (Chinese bird spider), this protein is Hainantoxin-XVII.2.